Here is a 306-residue protein sequence, read N- to C-terminus: GTP cyclohydrolase FolE2 (306 aa).

It belongs to the GTP cyclohydrolase IV family.

The enzyme catalyses GTP + H2O = 7,8-dihydroneopterin 3'-triphosphate + formate + H(+). It functions in the pathway cofactor biosynthesis; 7,8-dihydroneopterin triphosphate biosynthesis; 7,8-dihydroneopterin triphosphate from GTP: step 1/1. Converts GTP to 7,8-dihydroneopterin triphosphate. The chain is GTP cyclohydrolase FolE2 from Pseudoalteromonas atlantica (strain T6c / ATCC BAA-1087).